The sequence spans 311 residues: UDP-N-acetylenolpyruvoylglucosamine reductase (311 aa).

Positions 29–191 constitute an FAD-binding PCMH-type domain; sequence IGGKADIVLK…LSARLKLKPI (163 aa). Arg172 is an active-site residue. Catalysis depends on Ser223, which acts as the Proton donor. Residue Glu299 is part of the active site.

Belongs to the MurB family. It depends on FAD as a cofactor.

It localises to the cytoplasm. The catalysed reaction is UDP-N-acetyl-alpha-D-muramate + NADP(+) = UDP-N-acetyl-3-O-(1-carboxyvinyl)-alpha-D-glucosamine + NADPH + H(+). The protein operates within cell wall biogenesis; peptidoglycan biosynthesis. Its function is as follows. Cell wall formation. This chain is UDP-N-acetylenolpyruvoylglucosamine reductase, found in Chloroherpeton thalassium (strain ATCC 35110 / GB-78).